The sequence spans 239 residues: Exosome complex exonuclease RRP46 homolog (239 aa).

The residue at position 1 (Met1) is an N-acetylmethionine.

Belongs to the RNase PH family. As to quaternary structure, probable component of the RNA exosome complex.

It localises to the nucleus. The protein localises to the nucleolus. Its function is as follows. Probable component of the exosome 3'-&gt;5' exoribonuclease complex, a complex that degrades inherently unstable mRNAs containing AU-rich elements (AREs) within their 3'-untranslated regions. This Arabidopsis thaliana (Mouse-ear cress) protein is Exosome complex exonuclease RRP46 homolog.